Reading from the N-terminus, the 431-residue chain is Adenylosuccinate synthetase (431 aa).

Residues 13-19 (GDEGKGK) and 41-43 (GHT) contribute to the GTP site. Asp14 functions as the Proton acceptor in the catalytic mechanism. Residues Asp14 and Gly41 each coordinate Mg(2+). IMP is bound by residues 14 to 17 (DEGK), 39 to 42 (NAGH), Thr130, Arg144, Gln225, Thr240, and Arg304. His42 functions as the Proton donor in the catalytic mechanism. 300-306 (ATTGRKR) is a substrate binding site. GTP contacts are provided by residues Arg306, 332–334 (KLD), and 415–417 (STG).

This sequence belongs to the adenylosuccinate synthetase family. In terms of assembly, homodimer. Mg(2+) serves as cofactor.

It localises to the cytoplasm. The enzyme catalyses IMP + L-aspartate + GTP = N(6)-(1,2-dicarboxyethyl)-AMP + GDP + phosphate + 2 H(+). It participates in purine metabolism; AMP biosynthesis via de novo pathway; AMP from IMP: step 1/2. Functionally, plays an important role in the de novo pathway of purine nucleotide biosynthesis. Catalyzes the first committed step in the biosynthesis of AMP from IMP. In Shewanella denitrificans (strain OS217 / ATCC BAA-1090 / DSM 15013), this protein is Adenylosuccinate synthetase.